Reading from the N-terminus, the 151-residue chain is Deoxyuridine 5'-triphosphate nucleotidohydrolase (151 aa).

Substrate is bound by residues Arg-70–Gly-72, Asn-83, Leu-87–Asp-89, and Met-97.

This sequence belongs to the dUTPase family. Mg(2+) serves as cofactor.

The enzyme catalyses dUTP + H2O = dUMP + diphosphate + H(+). It participates in pyrimidine metabolism; dUMP biosynthesis; dUMP from dCTP (dUTP route): step 2/2. This enzyme is involved in nucleotide metabolism: it produces dUMP, the immediate precursor of thymidine nucleotides and it decreases the intracellular concentration of dUTP so that uracil cannot be incorporated into DNA. The protein is Deoxyuridine 5'-triphosphate nucleotidohydrolase of Salmonella enteritidis PT4 (strain P125109).